Reading from the N-terminus, the 998-residue chain is DNA damage-induced apoptosis suppressor protein (998 aa).

The tract at residues 815-834 is disordered; the sequence is DKQQASPSCPKNIKTPSQKI. Residues 817 to 834 are compositionally biased toward polar residues; it reads QQASPSCPKNIKTPSQKI.

In terms of tissue distribution, highly expressed in colorectal and lung cancer tissues.

The protein localises to the cytoplasm. Its subcellular location is the nucleus. Its function is as follows. May be an anti-apoptotic protein involved in DNA repair or cell survival. The chain is DNA damage-induced apoptosis suppressor protein (DDIAS) from Homo sapiens (Human).